The chain runs to 476 residues: Argininosuccinate lyase (476 aa).

Belongs to the lyase 1 family. Argininosuccinate lyase subfamily.

Its subcellular location is the cytoplasm. It catalyses the reaction 2-(N(omega)-L-arginino)succinate = fumarate + L-arginine. It participates in amino-acid biosynthesis; L-arginine biosynthesis; L-arginine from L-ornithine and carbamoyl phosphate: step 3/3. The sequence is that of Argininosuccinate lyase from Thermobifida fusca (strain YX).